A 562-amino-acid chain; its full sequence is Arginine--tRNA ligase (562 aa).

A 'HIGH' region motif is present at residues Ala126–His136.

The protein belongs to the class-I aminoacyl-tRNA synthetase family. In terms of assembly, monomer.

Its subcellular location is the cytoplasm. It catalyses the reaction tRNA(Arg) + L-arginine + ATP = L-arginyl-tRNA(Arg) + AMP + diphosphate. This chain is Arginine--tRNA ligase, found in Salinibacter ruber (strain DSM 13855 / M31).